A 208-amino-acid chain; its full sequence is MIKVQTKWLERAQRIRAIAQAGLAFSKDVYDRERYEELMKLSAEMMADYSEKDIEVITDLWQGEKGYPTPKADVRGAVFRENQILLVREKHDELWSLPGGFCEIGLSPAENVVKEIKEESGYDTEPSRLLAVLDSHKHSHPPQPYHYYKIFIACSMTDGQGETGIETNHAAFFPEDRLPPLSPKRNTPSQLSMLFDFLRHPDKKTIFD.

The 127-residue stretch at 69–195 folds into the Nudix hydrolase domain; sequence TPKADVRGAV…NTPSQLSMLF (127 aa). Positions 100–121 match the Nudix box motif; sequence GFCEIGLSPAENVVKEIKEESG. Mg(2+)-binding residues include E115 and E119.

Belongs to the Nudix hydrolase family. It depends on Mg(2+) as a cofactor. Mn(2+) serves as cofactor.

Its function is as follows. Probably mediates the hydrolysis of some nucleoside diphosphate derivatives. This Bacillus subtilis (strain 168) protein is Putative ADP-ribose pyrophosphatase YjhB (yjhB).